Consider the following 190-residue polypeptide: dTTP/UTP pyrophosphatase (190 aa).

The active-site Proton acceptor is Asp71.

It belongs to the Maf family. YhdE subfamily. A divalent metal cation serves as cofactor.

It localises to the cytoplasm. It carries out the reaction dTTP + H2O = dTMP + diphosphate + H(+). It catalyses the reaction UTP + H2O = UMP + diphosphate + H(+). Functionally, nucleoside triphosphate pyrophosphatase that hydrolyzes dTTP and UTP. May have a dual role in cell division arrest and in preventing the incorporation of modified nucleotides into cellular nucleic acids. This chain is dTTP/UTP pyrophosphatase, found in Xanthomonas euvesicatoria pv. vesicatoria (strain 85-10) (Xanthomonas campestris pv. vesicatoria).